Here is a 275-residue protein sequence, read N- to C-terminus: Bis(5'-nucleosyl)-tetraphosphatase, symmetrical (275 aa).

This sequence belongs to the Ap4A hydrolase family.

The catalysed reaction is P(1),P(4)-bis(5'-adenosyl) tetraphosphate + H2O = 2 ADP + 2 H(+). In terms of biological role, hydrolyzes diadenosine 5',5'''-P1,P4-tetraphosphate to yield ADP. The polypeptide is Bis(5'-nucleosyl)-tetraphosphatase, symmetrical (Marinomonas sp. (strain MWYL1)).